The sequence spans 204 residues: Probable carboxysome shell protein CsoS1E (204 aa).

Composition is skewed to low complexity over residues Met1–Ser14, Ser41–Ser84, and Gly92–Ser102. The tract at residues Met1–Ser102 is disordered. Residues Ala111–Arg196 enclose the BMC domain.

It belongs to the bacterial microcompartments protein family. Homohexamer.

It localises to the carboxysome. In terms of biological role, a probable carboxysomal shell protein found only in Prochlorococcus and Synechococcus strains that grow in low light. The sequence is that of Probable carboxysome shell protein CsoS1E from Prochlorococcus marinus (strain MIT 9313).